The primary structure comprises 127 residues: Holo-[acyl-carrier-protein] synthase (127 aa).

Mg(2+) contacts are provided by D8 and E59.

This sequence belongs to the P-Pant transferase superfamily. AcpS family. The cofactor is Mg(2+).

The protein localises to the cytoplasm. It catalyses the reaction apo-[ACP] + CoA = holo-[ACP] + adenosine 3',5'-bisphosphate + H(+). In terms of biological role, transfers the 4'-phosphopantetheine moiety from coenzyme A to a Ser of acyl-carrier-protein. This is Holo-[acyl-carrier-protein] synthase from Rickettsia bellii (strain OSU 85-389).